We begin with the raw amino-acid sequence, 253 residues long: Geranylgeranylglyceryl phosphate synthase (253 aa).

Mg(2+) is bound by residues Asp28 and Ser53. Sn-glycerol 1-phosphate is bound by residues 172–178, 203–204, and 225–226; these read YLEAGSG, GG, and GN.

It belongs to the GGGP/HepGP synthase family. Group II subfamily. Mg(2+) is required as a cofactor.

The protein resides in the cytoplasm. The enzyme catalyses sn-glycerol 1-phosphate + (2E,6E,10E)-geranylgeranyl diphosphate = sn-3-O-(geranylgeranyl)glycerol 1-phosphate + diphosphate. The protein operates within membrane lipid metabolism; glycerophospholipid metabolism. In terms of biological role, prenyltransferase that catalyzes the transfer of the geranylgeranyl moiety of geranylgeranyl diphosphate (GGPP) to the C3 hydroxyl of sn-glycerol-1-phosphate (G1P). This reaction is the first ether-bond-formation step in the biosynthesis of archaeal membrane lipids. The polypeptide is Geranylgeranylglyceryl phosphate synthase (Methanocaldococcus jannaschii (strain ATCC 43067 / DSM 2661 / JAL-1 / JCM 10045 / NBRC 100440) (Methanococcus jannaschii)).